Consider the following 549-residue polypeptide: Glucose-6-phosphate isomerase (549 aa).

Catalysis depends on E355, which acts as the Proton donor. Catalysis depends on residues H386 and K514.

This sequence belongs to the GPI family.

Its subcellular location is the cytoplasm. The enzyme catalyses alpha-D-glucose 6-phosphate = beta-D-fructose 6-phosphate. It participates in carbohydrate biosynthesis; gluconeogenesis. The protein operates within carbohydrate degradation; glycolysis; D-glyceraldehyde 3-phosphate and glycerone phosphate from D-glucose: step 2/4. Catalyzes the reversible isomerization of glucose-6-phosphate to fructose-6-phosphate. The polypeptide is Glucose-6-phosphate isomerase (Salmonella gallinarum (strain 287/91 / NCTC 13346)).